A 126-amino-acid polypeptide reads, in one-letter code: Holo-[acyl-carrier-protein] synthase (126 aa).

Residues D8 and E57 each coordinate Mg(2+).

The protein belongs to the P-Pant transferase superfamily. AcpS family. Mg(2+) is required as a cofactor.

The protein localises to the cytoplasm. The catalysed reaction is apo-[ACP] + CoA = holo-[ACP] + adenosine 3',5'-bisphosphate + H(+). Transfers the 4'-phosphopantetheine moiety from coenzyme A to a Ser of acyl-carrier-protein. The chain is Holo-[acyl-carrier-protein] synthase from Halorhodospira halophila (strain DSM 244 / SL1) (Ectothiorhodospira halophila (strain DSM 244 / SL1)).